The following is a 399-amino-acid chain: Na(+)/H(+) antiporter NhaA (399 aa).

11 helical membrane-spanning segments follow: residues 12–32, 60–80, 94–114, 126–146, 155–175, 178–198, 206–226, 263–283, 284–304, 336–356, and 372–392; these read LDIAAGVILVGAAVLALIAAN, LLLWINDGLMAVFFLLVGLEI, LAALPAVAAVGGMVVPALIYA, GWAIPAATDIAFALGILTLLG, IFLTALAIIDDLGAILIIAFF, ASLSPLALLLAAACLALLIGL, LWPYLLIGVVLWVCVLKSGVH, PWVTYAILPLFAFANAGVSLA, GLPPSALLAPVPLGIVLGLFL, GVALITGVGFTMSLFIGTLAF, and LGVLSGSLLSGVIGYLVLRLS.

Belongs to the NhaA Na(+)/H(+) (TC 2.A.33) antiporter family.

Its subcellular location is the cell inner membrane. It catalyses the reaction Na(+)(in) + 2 H(+)(out) = Na(+)(out) + 2 H(+)(in). In terms of biological role, na(+)/H(+) antiporter that extrudes sodium in exchange for external protons. This chain is Na(+)/H(+) antiporter NhaA, found in Rhodospirillum rubrum (strain ATCC 11170 / ATH 1.1.1 / DSM 467 / LMG 4362 / NCIMB 8255 / S1).